The primary structure comprises 2146 residues: Conidial pigment polyketide synthase alb1 (2146 aa).

Positions 8–244 (YLFGDQTISC…KAPGVSGPYH (237 aa)) are N-terminal acylcarrier protein transacylase domain (SAT). A Ketosynthase family 3 (KS3) domain is found at 375-806 (RSKIAIIGMS…GGNTALLMED (432 aa)). Residues cysteine 547, histidine 682, and histidine 724 each act as for beta-ketoacyl synthase activity in the active site. Residues 911-1232 (GFVFTGQGAQ…LSTLHLAGVE (322 aa)) are malonyl-CoA:ACP transacylase (MAT) domain. The active-site For acyl/malonyl transferase activity is the serine 1001. The interval 1290–1602 (TTAAQKIVEC…ARKILDTVLP (313 aa)) is product template (PT) domain. Residues 1294-1427 (QKIVECREDG…VKLFNCAERE (134 aa)) form an N-terminal hotdog fold region. The PKS/mFAS DH domain maps to 1294-1598 (QKIVECREDG…FQALARKILD (305 aa)). Histidine 1326 acts as the Proton acceptor; for dehydratase activity in catalysis. Residues 1453-1598 (AHRMQRGMVY…FQALARKILD (146 aa)) form a C-terminal hotdog fold region. The active-site Proton donor; for dehydratase activity is aspartate 1511. Residues 1611-1644 (GAPAPAPARPIGEKKAPPPIKVTGPPKPNPSNAR) are disordered. Positions 1627–1639 (PPPIKVTGPPKPN) are enriched in pro residues. The 75-residue stretch at 1647-1721 (SPVVARALEI…DFKAYLAEKG (75 aa)) folds into the Carrier 1 domain. The residue at position 1681 (serine 1681) is an O-(pantetheine 4'-phosphoryl)serine. The disordered stretch occupies residues 1724–1769 (DSSSPEPSSEPESKFSFNSDASSEASSGLTTPGITSPVKHEAPKGG). Low complexity predominate over residues 1738 to 1750 (FSFNSDASSEASS). Positions 1768 to 1845 (GGQNKVWKSI…AVQAALDLKP (78 aa)) constitute a Carrier 2 domain. Serine 1805 carries the post-translational modification O-(pantetheine 4'-phosphoryl)serine. The claisen cyclase domain stretch occupies residues 1892 to 2019 (KLFMFPDGSG…SIGLFGDGKR (128 aa)). Residue serine 1962 is the For Claisen cyclase activity of the active site.

The protein localises to the endosome. The enzyme catalyses 6 malonyl-CoA + acetyl-CoA + 6 H(+) = naphtopyrone YWA1 + 6 CO2 + 7 CoA + H2O. The protein operates within pigment biosynthesis; melanin biosynthesis. In terms of biological role, non-reducing polyketide synthase; part of the gene cluster that mediates the biosynthesis of dihydroxynaphthalene (DHN)-melanin, a bluish-green pigment and a structural component of the conidial wall. The first step of the pathway is the production of the heptaketide naphtopyrone YWA1 by the polyketide synthase alb1 though condensation of acetyl-CoA with malonyl-CoA. The naphtopyrone YWA1 is then converted to the pentaketide 1,3,6,8-tetrahydroxynaphthalene (1,3,6,8-THN) by the heptaketide hydrolyase ayg1 though chain-length shortening. 1,3,6,8-THN is substrate of the hydroxynaphthalene reductase arp2 to yield scytalone. The scytalone dehydratase arp1 then reduces scytalone to 1,3,8-THN. 1,3,8-THN is also substrate of the hydroxynaphthalene reductase arp2 to yield vermelone. Vermelone is further converted by the multicopper oxidase abr1 to 1,8-DHN. Finally the laccase abr2 transforms 1,8-DHN to DHN-melanin. DHN-melanin biosynthesis appears to be initiated in endosomes where early enzymes (abl1, ayg1, arp1 and arp2) localize, with exocytosis leading to melanin deposition on the cell surface where late enzymes (abr1 and abr2) localize. DHN-melanin is an important structural component of the outer cell wall and is required for the presence of conidial surface hydrophobins. DHN-melanin also plays a crucial role in fungal virulence, including a protective role against the host's immune defenses. DHN-melanin protects also conidia against amoeba predation. The polypeptide is Conidial pigment polyketide synthase alb1 (Aspergillus fumigatus (strain ATCC MYA-4609 / CBS 101355 / FGSC A1100 / Af293) (Neosartorya fumigata)).